Here is a 61-residue protein sequence, read N- to C-terminus: Large ribosomal subunit protein bL28 (61 aa).

This sequence belongs to the bacterial ribosomal protein bL28 family.

The polypeptide is Large ribosomal subunit protein bL28 (Lactobacillus gasseri (strain ATCC 33323 / DSM 20243 / BCRC 14619 / CIP 102991 / JCM 1131 / KCTC 3163 / NCIMB 11718 / NCTC 13722 / AM63)).